A 119-amino-acid polypeptide reads, in one-letter code: Ribonuclease P protein component (119 aa).

This sequence belongs to the RnpA family. In terms of assembly, consists of a catalytic RNA component (M1 or rnpB) and a protein subunit.

It carries out the reaction Endonucleolytic cleavage of RNA, removing 5'-extranucleotides from tRNA precursor.. Its function is as follows. RNaseP catalyzes the removal of the 5'-leader sequence from pre-tRNA to produce the mature 5'-terminus. It can also cleave other RNA substrates such as 4.5S RNA. The protein component plays an auxiliary but essential role in vivo by binding to the 5'-leader sequence and broadening the substrate specificity of the ribozyme. In Streptococcus equi subsp. equi (strain 4047), this protein is Ribonuclease P protein component.